We begin with the raw amino-acid sequence, 293 residues long: MPELPEVETVRRGLQPFMEGATVVRVEQNRPDLRFAFPENFAERLSGRRIEALGRRAKYLTVHLDDGLSIISHLGMSGSFRIEAEDAQGLPGGFHHERSKNSLHDHVVFHLMRPDGASARIIYNDPRRFGFMLFAEKGALEEHPLLKDLGVEPTGNLLSGEVLAALFKGRRKPLKAALLDQRLIAGLGNIYVCEALWRAGLSPMRAAGSVAGEMDVMERLAGAIRSVIAQAIAAGGSSLKDYIQADGALGYFQHSFSVYGREGKPCRNPACGGTVERVVQSGRSTFFCASCQT.

Proline 2 functions as the Schiff-base intermediate with DNA in the catalytic mechanism. Residue glutamate 3 is the Proton donor of the active site. Lysine 58 acts as the Proton donor; for beta-elimination activity in catalysis. 3 residues coordinate DNA: histidine 104, arginine 127, and arginine 170. The FPG-type zinc finger occupies 257-293; it reads SVYGREGKPCRNPACGGTVERVVQSGRSTFFCASCQT. Arginine 283 functions as the Proton donor; for delta-elimination activity in the catalytic mechanism.

The protein belongs to the FPG family. As to quaternary structure, monomer. The cofactor is Zn(2+).

It catalyses the reaction Hydrolysis of DNA containing ring-opened 7-methylguanine residues, releasing 2,6-diamino-4-hydroxy-5-(N-methyl)formamidopyrimidine.. The catalysed reaction is 2'-deoxyribonucleotide-(2'-deoxyribose 5'-phosphate)-2'-deoxyribonucleotide-DNA = a 3'-end 2'-deoxyribonucleotide-(2,3-dehydro-2,3-deoxyribose 5'-phosphate)-DNA + a 5'-end 5'-phospho-2'-deoxyribonucleoside-DNA + H(+). Functionally, involved in base excision repair of DNA damaged by oxidation or by mutagenic agents. Acts as a DNA glycosylase that recognizes and removes damaged bases. Has a preference for oxidized purines, such as 7,8-dihydro-8-oxoguanine (8-oxoG). Has AP (apurinic/apyrimidinic) lyase activity and introduces nicks in the DNA strand. Cleaves the DNA backbone by beta-delta elimination to generate a single-strand break at the site of the removed base with both 3'- and 5'-phosphates. This is Formamidopyrimidine-DNA glycosylase from Brucella canis (strain ATCC 23365 / NCTC 10854 / RM-666).